The primary structure comprises 356 residues: Butyrate kinase (356 aa).

The protein belongs to the acetokinase family.

The protein localises to the cytoplasm. The catalysed reaction is butanoate + ATP = butanoyl phosphate + ADP. It participates in lipid metabolism; butanoate metabolism. In terms of biological role, catalyzes the conversion of butyryl-CoA through butyryl phosphate to butyrate. The polypeptide is Butyrate kinase (buk) (Clostridium perfringens (strain ATCC 13124 / DSM 756 / JCM 1290 / NCIMB 6125 / NCTC 8237 / Type A)).